The chain runs to 132 residues: Large ribosomal subunit protein uL22c (132 aa).

Belongs to the universal ribosomal protein uL22 family. As to quaternary structure, part of the 50S ribosomal subunit.

The protein resides in the plastid. It localises to the chloroplast. In terms of biological role, this protein binds specifically to 23S rRNA. Its function is as follows. The globular domain of the protein is located near the polypeptide exit tunnel on the outside of the subunit, while an extended beta-hairpin is found that lines the wall of the exit tunnel in the center of the 70S ribosome. The chain is Large ribosomal subunit protein uL22c (rpl22) from Staurastrum punctulatum (Green alga).